We begin with the raw amino-acid sequence, 72 residues long: MSKEDMIEFSGTVMELLPNAMFRVKLDNEHSILAHTSGKMRKNRIRVLAGDRVNVEMTPYDLTKGRITFRFK.

The region spanning 1–72 (MSKEDMIEFS…TKGRITFRFK (72 aa)) is the S1-like domain.

This sequence belongs to the IF-1 family. As to quaternary structure, component of the 30S ribosomal translation pre-initiation complex which assembles on the 30S ribosome in the order IF-2 and IF-3, IF-1 and N-formylmethionyl-tRNA(fMet); mRNA recruitment can occur at any time during PIC assembly.

Its subcellular location is the cytoplasm. Its function is as follows. One of the essential components for the initiation of protein synthesis. Stabilizes the binding of IF-2 and IF-3 on the 30S subunit to which N-formylmethionyl-tRNA(fMet) subsequently binds. Helps modulate mRNA selection, yielding the 30S pre-initiation complex (PIC). Upon addition of the 50S ribosomal subunit IF-1, IF-2 and IF-3 are released leaving the mature 70S translation initiation complex. This is Translation initiation factor IF-1 from Granulibacter bethesdensis (strain ATCC BAA-1260 / CGDNIH1).